A 318-amino-acid polypeptide reads, in one-letter code: Ubiquitin-conjugating enzyme E2 J1 (318 aa).

The Cytoplasmic portion of the chain corresponds to 1-282 (METRYNLKSP…QGQPPRAHHT (282 aa)). Residues 10–168 (PAVKRLMKEA…VLLPLKSGSG (159 aa)) form the UBC core domain. The Glycyl thioester intermediate role is filled by Cys-91. Ser-184 bears the Phosphoserine mark. The span at 215 to 233 (PTTFQGATASTSYGAQNPS) shows a compositional bias: polar residues. Residues 215–283 (PTTFQGATAS…GQPPRAHHTE (69 aa)) form a disordered region. Over residues 249-269 (SMSPRQRRAQQQSQRRPSTSP) the composition is skewed to low complexity. Phosphoserine occurs at positions 266 and 268. A helical; Anchor for type IV membrane protein membrane pass occupies residues 283–303 (EHGGSAMLIIILTLALAALIF). The Lumenal segment spans residues 304-318 (RRIYLANEYIFDFEL).

The protein belongs to the ubiquitin-conjugating enzyme family. As to quaternary structure, component of the HRD1 complex, which comprises at least SYNV1/HRD1, DERL1/2, FAM8A1, HERPUD1/HERP, OS9, SEL1L and UBE2J1. Interacts with E3 ligase RNF26. Interacts with E3 ligase RNF133. Phosphorylated at Ser-184 in a cytosolic stress-dependent manner by MAP kinase p38 MAPKAPK2. In terms of processing, phosphorylated UBE2J1 is rapidly ubiquitinated and subsequently degraded by the proteasome.

It is found in the endoplasmic reticulum membrane. The enzyme catalyses S-ubiquitinyl-[E1 ubiquitin-activating enzyme]-L-cysteine + [E2 ubiquitin-conjugating enzyme]-L-cysteine = [E1 ubiquitin-activating enzyme]-L-cysteine + S-ubiquitinyl-[E2 ubiquitin-conjugating enzyme]-L-cysteine.. It functions in the pathway protein modification; protein ubiquitination. Functionally, catalyzes the covalent attachment of ubiquitin to other proteins. Functions in the selective degradation of misfolded membrane proteins from the endoplasmic reticulum (ERAD) and is essential for cells to recover from ER stress. Plays a role in MAPKAPK2-dependent translational control of TNF-alpha synthesis. Also acts as a platform for perinuclear positioning of the endosomal system by mediating ubiquitination of SQSTM1 through interaction with the E3 ubiquitin-protein ligase RNF26. Plays a role in male fecundity through the interaction with the E3 ubiquitin-protein ligase RNF133. The sequence is that of Ubiquitin-conjugating enzyme E2 J1 (Ube2j1) from Mus musculus (Mouse).